Reading from the N-terminus, the 319-residue chain is MQFSLIPFISSFALTVIFLPLFIGFMRMKHEGQVIRDEGPKWHEKKSGTPTMGGVVFMLAGVISTLWVLIWQKDLNKTAWILIIAFLGYGIIGFLDDGIKLYFKRNLGLRAWQKLLGQIIIAALIITLAFSDHFAFELYIPFAGMVRNSFLFSLFVLFWLVGFSNAVNLSDGLDGLATGLSIIAYATYAWIAYQERNWVIVVFTLSVIGGLVGFFIFNHKPAKIFMGDAGSLALGGGLATVSIFLHRPWSLLLIGIVFVLETLSVILQVISFQTTGKRIFKMTPIHHHFEMLGWSEWKVDIVFWIVGLIGSIIYLIIWG.

The next 10 membrane-spanning stretches (helical) occupy residues 5 to 25, 51 to 71, 79 to 99, 116 to 136, 149 to 169, 172 to 192, 197 to 217, 224 to 244, 252 to 272, and 299 to 319; these read LIPFISSFALTVIFLPLFIGF, TMGGVVFMLAGVISTLWVLIW, AWILIIAFLGYGIIGFLDDGI, LGQIIIAALIITLAFSDHFAF, SFLFSLFVLFWLVGFSNAVNL, GLDGLATGLSIIAYATYAWIA, NWVIVVFTLSVIGGLVGFFIF, IFMGDAGSLALGGGLATVSIF, LLIGIVFVLETLSVILQVISF, and VDIVFWIVGLIGSIIYLIIWG.

The protein belongs to the glycosyltransferase 4 family. MraY subfamily. Mg(2+) is required as a cofactor.

It is found in the cell membrane. It carries out the reaction UDP-N-acetyl-alpha-D-muramoyl-L-alanyl-gamma-D-glutamyl-L-lysyl-D-alanyl-D-alanine + di-trans,octa-cis-undecaprenyl phosphate = Mur2Ac(oyl-L-Ala-gamma-D-Glu-L-Lys-D-Ala-D-Ala)-di-trans,octa-cis-undecaprenyl diphosphate + UMP. Its pathway is cell wall biogenesis; peptidoglycan biosynthesis. Its function is as follows. Catalyzes the initial step of the lipid cycle reactions in the biosynthesis of the cell wall peptidoglycan: transfers peptidoglycan precursor phospho-MurNAc-pentapeptide from UDP-MurNAc-pentapeptide onto the lipid carrier undecaprenyl phosphate, yielding undecaprenyl-pyrophosphoryl-MurNAc-pentapeptide, known as lipid I. The polypeptide is Phospho-N-acetylmuramoyl-pentapeptide-transferase (Lactobacillus johnsonii (strain CNCM I-12250 / La1 / NCC 533)).